The sequence spans 85 residues: 4-hydroxyphenylacetate decarboxylase small subunit (85 aa).

Positions 4, 7, 20, 34, 43, 46, 60, and 78 each coordinate [4Fe-4S] cluster.

It belongs to the HPA decarboxylase small subunit family. Heterooctamer consisting of 4 large (HpdB) subunits and 4 small (HpdC) subunits, arranged as a tetramer of heterodimers. It depends on [4Fe-4S] cluster as a cofactor.

It carries out the reaction 4-hydroxyphenylacetate + H(+) = 4-methylphenol + CO2. The catalysed reaction is 3,4-dihydroxyphenylacetate + H(+) = 4-methylcatechol + CO2. Functionally, component of the HPA decarboxylase that decarboxylates phenylacetates with a hydroxyl group in the p-position. Active toward 4-hydroxyphenylacetate and 3,4-dihydroxyphenylacetate, forming 4-methylphenol and 4-methylcatechol, respectively. Is likely involved in the catabolism of aromatic amino acids such as tyrosine fermentation. 4-methylphenol (p-cresol) formation provides metabolic toxicity, which allows an active suppression of other microbes and may provide growth advantages for the producers in highly competitive environments. The small subunit is essential for enzymatic activity of HPA decarboxylase, and also seems to be involved in the regulation of the enzyme oligomeric state and catalytic activity. In Clostridioides difficile (strain CD196) (Peptoclostridium difficile), this protein is 4-hydroxyphenylacetate decarboxylase small subunit.